A 462-amino-acid chain; its full sequence is Juvenile hormone epoxide hydrolase (462 aa).

Residues 4-24 (ILSSFVAGVAIGSGLVITYVL) traverse the membrane as a helical segment. Aspartate 227 acts as the Nucleophile in catalysis. Tyrosine 372 functions as the Proton donor in the catalytic mechanism. The active-site Proton acceptor is histidine 428.

It belongs to the peptidase S33 family.

It is found in the microsome membrane. The protein resides in the endoplasmic reticulum membrane. The catalysed reaction is cis-stilbene oxide + H2O = (1R,2R)-hydrobenzoin. It catalyses the reaction 1-(4-methoxyphenyl)-N-methyl-N-[(3-methyloxetan-3-yl)methyl]methanamine + H2O = 2-{[(4-methoxybenzyl)(methyl)amino]methyl}-2-methylpropane-1,3-diol. Functionally, catalyzes juvenile hormone hydrolysis. This Manduca sexta (Tobacco hawkmoth) protein is Juvenile hormone epoxide hydrolase.